Consider the following 466-residue polypeptide: Integrator complex subunit 12 (466 aa).

The interval 41-101 (KGNDSVYRPQ…EAEKRSADKM (61 aa)) is disordered. Residues 69-84 (KASSSTPSSSMLSKPL) show a composition bias toward low complexity. The span at 85–101 (TSEKLKKEAEKRSADKM) shows a compositional bias: basic and acidic residues. Residues 156 to 212 (GLACVVCRQMTVFSGNQLVECQECHNLYHQDCHKPQVTDKDVNDPRLVWYCARCTRQ) form a PHD-type zinc finger. 2 disordered regions span residues 216–251 (MAQK…ELKA) and 311–466 (GTSS…KLKK). Polar residues-rich tracts occupy residues 218 to 233 (QKNQ…SAVS) and 311 to 329 (GTSS…SVQK). Residues 338-373 (PSKPGSVSKSGSGGSSSSSTIPIKPLPPLILGKTGL) are compositionally biased toward low complexity. The span at 374–386 (SRSMSSDNVSKTG) shows a compositional bias: polar residues. Residues 392–423 (PSSAGSVSSLSSQLGSNNGSSSAAGSNVTSSN) show a composition bias toward low complexity. Residues 453–466 (QMVKKKAAQKKLKK) show a composition bias toward basic residues.

It belongs to the Integrator subunit 12 family. Component of the Integrator complex, composed of core subunits INTS1, INTS2, INTS3, INTS4, INTS5, INTS6, INTS7, INTS8, INTS9/RC74, INTS10, INTS11/CPSF3L, INTS12, INTS13, INTS14 and INTS15. The core complex associates with protein phosphatase 2A subunits PPP2CA and PPP2R1A, to form the Integrator-PP2A (INTAC) complex.

Its subcellular location is the nucleus. In terms of biological role, component of the integrator complex, a multiprotein complex that terminates RNA polymerase II (Pol II) transcription in the promoter-proximal region of genes. The integrator complex provides a quality checkpoint during transcription elongation by driving premature transcription termination of transcripts that are unfavorably configured for transcriptional elongation: the complex terminates transcription by (1) catalyzing dephosphorylation of the C-terminal domain (CTD) of Pol II subunit POLR2A/RPB1 and SUPT5H/SPT5, (2) degrading the exiting nascent RNA transcript via endonuclease activity and (3) promoting the release of Pol II from bound DNA. The integrator complex is also involved in terminating the synthesis of non-coding Pol II transcripts, such as enhancer RNAs (eRNAs), small nuclear RNAs (snRNAs), telomerase RNAs and long non-coding RNAs (lncRNAs). The polypeptide is Integrator complex subunit 12 (ints12) (Xenopus tropicalis (Western clawed frog)).